We begin with the raw amino-acid sequence, 449 residues long: Tubulin alpha-1B chain (449 aa).

Q11 contacts GTP. Position 40 is an N6-acetyllysine (K40). 7 residues coordinate GTP: E71, S140, G144, T145, T179, N206, and N228. E71 contacts Mg(2+). Residue E254 is part of the active site.

Belongs to the tubulin family. In terms of assembly, dimer of alpha and beta chains. A typical microtubule is a hollow water-filled tube with an outer diameter of 25 nm and an inner diameter of 15 nM. Alpha-beta heterodimers associate head-to-tail to form protofilaments running lengthwise along the microtubule wall with the beta-tubulin subunit facing the microtubule plus end conferring a structural polarity. Microtubules usually have 13 protofilaments but different protofilament numbers can be found in some organisms and specialized cells. The cofactor is Mg(2+). In terms of processing, acetylation of alpha chains at Lys-40 stabilizes microtubules and affects affinity and processivity of microtubule motors. This modification has a role in multiple cellular functions, ranging from cell motility, cell cycle progression or cell differentiation to intracellular trafficking and signaling.

The protein resides in the cytoplasm. It localises to the cytoskeleton. The protein localises to the spindle. Its subcellular location is the nucleus. The catalysed reaction is GTP + H2O = GDP + phosphate + H(+). Functionally, tubulin is the major constituent of microtubules, a cylinder consisting of laterally associated linear protofilaments composed of alpha- and beta-tubulin heterodimers. Microtubules grow by the addition of GTP-tubulin dimers to the microtubule end, where a stabilizing cap forms. Below the cap, tubulin dimers are in GDP-bound state, owing to GTPase activity of alpha-tubulin. The polypeptide is Tubulin alpha-1B chain (ALTBN) (Physarum polycephalum (Slime mold)).